The primary structure comprises 36 residues: Conotoxin Cal6.1h (36 aa).

A propeptide spanning residues 1–7 is cleaved from the precursor; the sequence is GLGRPSR. 3 cysteine pairs are disulfide-bonded: cysteine 9–cysteine 25, cysteine 16–cysteine 29, and cysteine 24–cysteine 34.

This sequence belongs to the conotoxin O1 superfamily. Expressed by the venom duct.

It localises to the secreted. Probable neurotoxin with unknown target. Possibly targets ion channels. The protein is Conotoxin Cal6.1h of Californiconus californicus (California cone).